The chain runs to 221 residues: MKLRAVVLGLATLCTSTATFAGMVSTSSNLEFLAIDGQKASKSLGKAKTFTVDDTQSHQVVVRLNEIVGSGSNQSLFESNPVIVTFQGNAEDLVISAPAIRNLDSGDKFNQMPNITVKTKSGNAISAKVDVLKQEGLFPSGNVLNDLAEYNASGAAASVSKFTATTSANSMVAVPAGNAKANKGKVVVQGENVAEQQLQYWFQQADKETQTRFLNWAKSHK.

Positions 1–21 (MKLRAVVLGLATLCTSTATFA) are cleaved as a signal peptide.

This sequence belongs to the UPF0319 family.

This is UPF0319 protein NTHI1987 from Haemophilus influenzae (strain 86-028NP).